A 182-amino-acid polypeptide reads, in one-letter code: Ribosome maturation factor RimM (182 aa).

The PRC barrel domain occupies 102–182 (EEGDYYWKDL…TIEVDWDPGF (81 aa)).

This sequence belongs to the RimM family. As to quaternary structure, binds ribosomal protein uS19.

The protein localises to the cytoplasm. An accessory protein needed during the final step in the assembly of 30S ribosomal subunit, possibly for assembly of the head region. Essential for efficient processing of 16S rRNA. May be needed both before and after RbfA during the maturation of 16S rRNA. It has affinity for free ribosomal 30S subunits but not for 70S ribosomes. In Salmonella enteritidis PT4 (strain P125109), this protein is Ribosome maturation factor RimM.